A 122-amino-acid polypeptide reads, in one-letter code: Acidic phospholipase A2 A' (122 aa).

7 disulfide bridges follow: cysteine 26–cysteine 115, cysteine 28–cysteine 44, cysteine 43–cysteine 95, cysteine 49–cysteine 122, cysteine 50–cysteine 88, cysteine 57–cysteine 81, and cysteine 75–cysteine 86. Positions 27, 29, and 31 each coordinate Ca(2+). The active site involves histidine 47. Residue aspartate 48 coordinates Ca(2+). Residue aspartate 89 is part of the active site.

Belongs to the phospholipase A2 family. Group II subfamily. D49 sub-subfamily. The cofactor is Ca(2+). As to expression, expressed by the venom gland.

It is found in the secreted. The catalysed reaction is a 1,2-diacyl-sn-glycero-3-phosphocholine + H2O = a 1-acyl-sn-glycero-3-phosphocholine + a fatty acid + H(+). Functionally, PLA2 catalyzes the calcium-dependent hydrolysis of the 2-acyl groups in 3-sn-phosphoglycerides. In Gloydius halys (Chinese water mocassin), this protein is Acidic phospholipase A2 A'.